We begin with the raw amino-acid sequence, 385 residues long: Isomaltose glucohydrolase (385 aa).

W125 is a binding site for substrate. The active-site Proton acceptor is the D175. Residue E178 is the Proton donor of the active site. The active-site Proton acceptor is E335.

It belongs to the glycosyl hydrolase 15 family.

The protein localises to the cytoplasm. The catalysed reaction is isomaltose + H2O = beta-D-glucose + D-glucose. In terms of biological role, involved in the intracellular degradation of the cyclic tetrasaccharide cyclobis-(1-6)-alpha-nigerosyl (CNN) formed extracellularly from starch. Catalyzes the hydrolysis of alpha-1,6-glucosidic linkage from the non-reducing end of isomaltose to yield beta-D-glucose and D-glucose. Can also act on panose and isomaltotriose at a lower rate. It displays low or no activity toward CNN and the general GH15 enzyme substrates such as maltose, soluble starch or dextran. The polypeptide is Isomaltose glucohydrolase (Kribbella flavida (strain DSM 17836 / JCM 10339 / NBRC 14399)).